The primary structure comprises 218 residues: Large ribosomal subunit protein bL25 (218 aa).

2 disordered regions span residues 1–20 and 185–218; these read MKTH…GPAR and PTAA…ASEE. Residues 192-218 are compositionally biased toward acidic residues; the sequence is EEGEEGEEGEEGGEGGEAEGAEAASEE.

Belongs to the bacterial ribosomal protein bL25 family. CTC subfamily. In terms of assembly, part of the 50S ribosomal subunit; part of the 5S rRNA/L5/L18/L25 subcomplex. Contacts the 5S rRNA. Binds to the 5S rRNA independently of L5 and L18.

This is one of the proteins that binds to the 5S RNA in the ribosome where it forms part of the central protuberance. The polypeptide is Large ribosomal subunit protein bL25 (Desulfatibacillum aliphaticivorans).